The sequence spans 68 residues: Large ribosomal subunit protein uL29 (68 aa).

This sequence belongs to the universal ribosomal protein uL29 family.

The sequence is that of Large ribosomal subunit protein uL29 from Bradyrhizobium sp. (strain BTAi1 / ATCC BAA-1182).